The primary structure comprises 315 residues: D-erythronate dehydrogenase (315 aa).

Residues serine 119, tyrosine 143, and lysine 147 each coordinate NAD(+). Tyrosine 143 serves as the catalytic Proton acceptor.

The protein belongs to the NAD(P)-dependent epimerase/dehydratase family.

The catalysed reaction is D-erythronate + NAD(+) = 2-dehydro-D-erythronate + NADH + H(+). Functionally, catalyzes oxidation of D-erythronate to 2-oxo-tetronate. Can use either NAD(+) or NADP(+) as cosubstrate, with a preference for NAD(+). In Haemophilus influenzae (strain ATCC 51907 / DSM 11121 / KW20 / Rd), this protein is D-erythronate dehydrogenase.